Here is a 116-residue protein sequence, read N- to C-terminus: Large ribosomal subunit protein bL17 (116 aa).

This sequence belongs to the bacterial ribosomal protein bL17 family. In terms of assembly, part of the 50S ribosomal subunit. Contacts protein L32.

This chain is Large ribosomal subunit protein bL17, found in Prochlorococcus marinus (strain NATL2A).